Reading from the N-terminus, the 48-residue chain is Large ribosomal subunit protein bL33 (48 aa).

It belongs to the bacterial ribosomal protein bL33 family.

In Streptococcus mutans serotype c (strain ATCC 700610 / UA159), this protein is Large ribosomal subunit protein bL33.